A 55-amino-acid polypeptide reads, in one-letter code: Beta-toxin Cn7 (55 aa).

The LCN-type CS-alpha/beta domain maps to 1 to 55 (KEGYIVNYHDGCKYECYKLGDNDYCLRECKLRVGKGAGGYCYAFACWCTHLYEQA). 3 disulfide bridges follow: Cys-16/Cys-41, Cys-25/Cys-46, and Cys-29/Cys-48.

It belongs to the long (3 C-C) scorpion toxin superfamily. Sodium channel inhibitor family. Beta subfamily. As to expression, expressed by the venom gland.

It localises to the secreted. Its function is as follows. Beta toxins bind voltage-independently at site-4 of sodium channels (Nav) and shift the voltage of activation toward more negative potentials thereby affecting sodium channel activation and promoting spontaneous and repetitive firing. This Centruroides noxius (Mexican scorpion) protein is Beta-toxin Cn7.